The primary structure comprises 118 residues: MSDNKAIQTLQNTKEFNEVIKVKGSLIIFDCFSTWCGPCKVIDPQILKLSQAYSDTYFYKLNVDEVPDVAQKLDIRFVPTFLLFKDGEKVAEVVGAKPKALEDAIRANLGCGATHSSN.

The region spanning 1–110 is the Thioredoxin domain; it reads MSDNKAIQTL…LEDAIRANLG (110 aa). Residues Cys36 and Cys39 are joined by a disulfide bond.

This sequence belongs to the thioredoxin family.

Its pathway is mycotoxin biosynthesis. In terms of biological role, thioredoxin; part of the gene clusters that mediate the biosynthesis of AM-toxins, host-selective toxins (HSTs) causing Alternaria blotch on apple, a worldwide distributed disease. AM-toxins are cyclic depsipeptides containing the 3 residues 2-hydroxy-isovaleric acid (2-HIV), dehydroalanine, L-alanine which are common for all 3 AM-toxins I to III. The fourth precursor is L-alpha-amino-methoxyphenyl-valeric acid (L-Amv) for AM-toxin I, L-alpha-amino-phenyl-valeric acid (L-Apv) for AM-toxin II, and L-alpha-amino-hydroxyphenyl-valeric acid (L-Ahv) for AM-toxin III. AM-toxins have two target sites for affecting susceptible apple cells; they cause invagination of the plasma membrane and electrolyte loss and chloroplast disorganization. The non-ribosomal peptide synthetase AMT1 contains 4 catalytic modules and is responsible for activation of each residue in AM-toxin. The aldo-keto reductase AMT2 catalyzes the conversion of 2-keto-isovaleric acid (2-KIV) to 2-hydroxy-isovaleric acid (2-HIV), one of the precursor residues incorporated by AMT1 during AM-toxin biosynthesis, by reduction of its ketone to an alcohol. The cytochrome P450 monooxygenase AMT3 and the thioesterase AMT4 are also important for AM-toxin production, but their exact function within the AM-toxin biosynthesis are not known yet. Up to 21 proteins (including AMT1 to AMT4) are predicted to be involved in AM-toxin biosynthesis since their expression ishighly up-regulated in AM-toxin-producing cultures. This Alternaria alternata (Alternaria rot fungus) protein is Thioredoxin AMT13.